We begin with the raw amino-acid sequence, 330 residues long: Pre-mRNA-splicing factor 38 (330 aa).

Residues 182 to 330 (SVLDEDLDDE…SRGERDRRRY (149 aa)) are disordered. Over residues 184 to 199 (LDEDLDDELPSDEEKA) the composition is skewed to acidic residues. The segment covering 213 to 224 (RRPRRVRSKSRS) has biased composition (basic residues). Residues 240–330 (RSRDYYDELE…SRGERDRRRY (91 aa)) show a composition bias toward basic and acidic residues.

This sequence belongs to the PRP38 family. In terms of assembly, component of the spliceosome C complex. Interacts with Mfap1 (via C-terminus). In terms of tissue distribution, detected in all germal and follicle cells.

The protein localises to the nucleus. Functionally, required for pre-mRNA splicing. The sequence is that of Pre-mRNA-splicing factor 38 from Drosophila melanogaster (Fruit fly).